Consider the following 195-residue polypeptide: Endoribonuclease YbeY (195 aa).

Positions 152, 156, and 162 each coordinate Zn(2+).

Belongs to the endoribonuclease YbeY family. Zn(2+) is required as a cofactor.

The protein resides in the cytoplasm. Single strand-specific metallo-endoribonuclease involved in late-stage 70S ribosome quality control and in maturation of the 3' terminus of the 16S rRNA. This is Endoribonuclease YbeY from Rhodopseudomonas palustris (strain BisB5).